The chain runs to 760 residues: Formin-like protein 8 (760 aa).

The N-terminal stretch at 1–29 (MAAMFNHPWPNLTLIYFFFIVVLPFQSLS) is a signal peptide. Pro residues predominate over residues 52–63 (PLLPPSSNPSPP). The segment at 52 to 71 (PLLPPSSNPSPPSNNSSSSD) is disordered. The chain crosses the membrane as a helical span at residues 78 to 98 (AVLITAASTLLVAGVFFFCLQ). Residues 204–313 (TEIPLLRGRS…VKLKPLHWDK (110 aa)) form a disordered region. Residues 253-274 (TPSPPPPIKKGSSPSPPPPPPV) are compositionally biased toward pro residues. In terms of domain architecture, FH2 spans 296–732 (SGGETSKQVK…GSPISPSSQR (437 aa)).

The protein belongs to the formin-like family. Class-I subfamily. In terms of assembly, interacts with profilin.

The protein resides in the cell membrane. In terms of biological role, might be involved in the organization and polarity of the actin cytoskeleton. Interacts with the barbed end of actin filaments and nucleates actin-filament polymerization in vitro. The protein is Formin-like protein 8 (FH8) of Arabidopsis thaliana (Mouse-ear cress).